The following is a 121-amino-acid chain: Small ribosomal subunit protein uS13 (121 aa).

Residues 91 to 121 (HRRGLPVRGQNTKNNARTRKGPSKTVAGKKK) are disordered. Basic residues predominate over residues 106–121 (ARTRKGPSKTVAGKKK).

It belongs to the universal ribosomal protein uS13 family. In terms of assembly, part of the 30S ribosomal subunit. Forms a loose heterodimer with protein S19. Forms two bridges to the 50S subunit in the 70S ribosome.

In terms of biological role, located at the top of the head of the 30S subunit, it contacts several helices of the 16S rRNA. In the 70S ribosome it contacts the 23S rRNA (bridge B1a) and protein L5 of the 50S subunit (bridge B1b), connecting the 2 subunits; these bridges are implicated in subunit movement. Contacts the tRNAs in the A and P-sites. The protein is Small ribosomal subunit protein uS13 of Listeria welshimeri serovar 6b (strain ATCC 35897 / DSM 20650 / CCUG 15529 / CIP 8149 / NCTC 11857 / SLCC 5334 / V8).